The following is a 316-amino-acid chain: Acetaldehyde dehydrogenase (316 aa).

Position 11 to 14 (11 to 14 (SGNI)) interacts with NAD(+). Cys-131 serves as the catalytic Acyl-thioester intermediate. NAD(+) is bound by residues 162–170 (SAGPGTRAN) and Asn-289.

Belongs to the acetaldehyde dehydrogenase family. In terms of assembly, interacts with MhpE.

It carries out the reaction acetaldehyde + NAD(+) + CoA = acetyl-CoA + NADH + H(+). It functions in the pathway aromatic compound metabolism; 3-phenylpropanoate degradation. Catalyzes the conversion of acetaldehyde to acetyl-CoA, using NAD(+) and coenzyme A. Is the final enzyme in the meta-cleavage pathway for the degradation of aromatic compounds. This Klebsiella pneumoniae (strain 342) protein is Acetaldehyde dehydrogenase.